Here is a 227-residue protein sequence, read N- to C-terminus: Phosphoribosylformylglycinamidine synthase subunit PurQ (227 aa).

Residues 3–225 (FAVIVFPGSN…LRNWRESHVV (223 aa)) form the Glutamine amidotransferase type-1 domain. Residue C86 is the Nucleophile of the active site. Active-site residues include H194 and E196.

In terms of assembly, part of the FGAM synthase complex composed of 1 PurL, 1 PurQ and 2 PurS subunits.

Its subcellular location is the cytoplasm. It catalyses the reaction N(2)-formyl-N(1)-(5-phospho-beta-D-ribosyl)glycinamide + L-glutamine + ATP + H2O = 2-formamido-N(1)-(5-O-phospho-beta-D-ribosyl)acetamidine + L-glutamate + ADP + phosphate + H(+). It carries out the reaction L-glutamine + H2O = L-glutamate + NH4(+). Its pathway is purine metabolism; IMP biosynthesis via de novo pathway; 5-amino-1-(5-phospho-D-ribosyl)imidazole from N(2)-formyl-N(1)-(5-phospho-D-ribosyl)glycinamide: step 1/2. Its function is as follows. Part of the phosphoribosylformylglycinamidine synthase complex involved in the purines biosynthetic pathway. Catalyzes the ATP-dependent conversion of formylglycinamide ribonucleotide (FGAR) and glutamine to yield formylglycinamidine ribonucleotide (FGAM) and glutamate. The FGAM synthase complex is composed of three subunits. PurQ produces an ammonia molecule by converting glutamine to glutamate. PurL transfers the ammonia molecule to FGAR to form FGAM in an ATP-dependent manner. PurS interacts with PurQ and PurL and is thought to assist in the transfer of the ammonia molecule from PurQ to PurL. The sequence is that of Phosphoribosylformylglycinamidine synthase subunit PurQ from Halalkalibacterium halodurans (strain ATCC BAA-125 / DSM 18197 / FERM 7344 / JCM 9153 / C-125) (Bacillus halodurans).